A 393-amino-acid chain; its full sequence is NAD(P)H-quinone oxidoreductase subunit H, chloroplastic (393 aa).

This sequence belongs to the complex I 49 kDa subunit family. In terms of assembly, NDH is composed of at least 16 different subunits, 5 of which are encoded in the nucleus.

The protein localises to the plastid. It is found in the chloroplast thylakoid membrane. The enzyme catalyses a plastoquinone + NADH + (n+1) H(+)(in) = a plastoquinol + NAD(+) + n H(+)(out). The catalysed reaction is a plastoquinone + NADPH + (n+1) H(+)(in) = a plastoquinol + NADP(+) + n H(+)(out). Functionally, NDH shuttles electrons from NAD(P)H:plastoquinone, via FMN and iron-sulfur (Fe-S) centers, to quinones in the photosynthetic chain and possibly in a chloroplast respiratory chain. The immediate electron acceptor for the enzyme in this species is believed to be plastoquinone. Couples the redox reaction to proton translocation, and thus conserves the redox energy in a proton gradient. In Sorghum bicolor (Sorghum), this protein is NAD(P)H-quinone oxidoreductase subunit H, chloroplastic.